We begin with the raw amino-acid sequence, 362 residues long: Alpha-glucoside transport ATP-binding protein AglK (362 aa).

The 232-residue stretch at 4–235 (LLLKDIRKSY…PANLFVARFI (232 aa)) folds into the ABC transporter domain. 36-43 (GPSGCGKS) provides a ligand contact to ATP.

It belongs to the ABC transporter superfamily.

Its subcellular location is the cell inner membrane. Functionally, part of the binding-protein-dependent transport system for alpha-glucosides such as sucrose, maltose and trehalose. Probably responsible for energy coupling to the transport system. This is Alpha-glucoside transport ATP-binding protein AglK (aglK) from Rhizobium meliloti (strain 1021) (Ensifer meliloti).